The primary structure comprises 198 residues: Protoplast secreted protein 2 (198 aa).

The N-terminal stretch at 1-21 is a signal peptide; that stretch reads MPRVAIIIYTLYGHVAATAEA. A Flavodoxin-like domain is found at 22 to 191; the sequence is EKKGIEAAGG…QVHEIQGKTF (170 aa).

Belongs to the WrbA family.

It is found in the secreted. The polypeptide is Protoplast secreted protein 2 (PST2) (Saccharomyces cerevisiae (strain ATCC 204508 / S288c) (Baker's yeast)).